We begin with the raw amino-acid sequence, 224 residues long: Oxaloacetate tautomerase FAHD2, mitochondrial (224 aa).

The N-terminal 30 residues, 1–30 (MATSMIQRLFKQGTKIVGVGLNYASHAKEL), are a transit peptide targeting the mitochondrion. Glu67, Glu69, and Asp98 together coordinate Mg(2+).

The protein belongs to the FAH family. Mg(2+) is required as a cofactor. Requires Mn(2+) as cofactor.

It is found in the mitochondrion. The catalysed reaction is oxaloacetate = enol-oxaloacetate. Its function is as follows. Tautomerase that converts enol-oxaloacetate, a strong inhibitor of succinate dehydrogenase, to the physiological keto form of oxaloacetate. The protein is Oxaloacetate tautomerase FAHD2, mitochondrial of Arabidopsis thaliana (Mouse-ear cress).